Consider the following 267-residue polypeptide: Putative methylsterol monooxygenase DDB_G0270946 (267 aa).

3 consecutive transmembrane segments (helical) span residues 31 to 51, 72 to 92, and 110 to 130; these read FIAHQVFYFGCFIPFLIADFI, YCAIKVILTQVLIQLPMMYIF, and IPYLLLTLVSSFIIEDFYFYW. The region spanning 119–249 is the Fatty acid hydroxylase domain; the sequence is SSFIIEDFYF…FTYLDKIFGT (131 aa). Positions 132 to 136 match the Histidine box-1 motif; sequence HRALH. Residues 145–149 carry the Histidine box-2 motif; sequence HKVHH. The Histidine box-3 signature appears at 224–230; the sequence is FHDYHHE.

It belongs to the sterol desaturase family. Fe cation is required as a cofactor.

It is found in the endoplasmic reticulum membrane. It catalyses the reaction 4,4-dimethyl-5alpha-cholest-7-en-3beta-ol + 6 Fe(II)-[cytochrome b5] + 3 O2 + 5 H(+) = 4alpha-carboxy-4beta-methyl-5alpha-cholest-7-ene-3beta-ol + 6 Fe(III)-[cytochrome b5] + 4 H2O. The protein operates within steroid biosynthesis; zymosterol biosynthesis; zymosterol from lanosterol: step 3/6. This Dictyostelium discoideum (Social amoeba) protein is Putative methylsterol monooxygenase DDB_G0270946.